Consider the following 76-residue polypeptide: MRTFALLTAMLLLVALHAQAEARQARADEAAAQQQPGTDDQGMAHSFTWPENAALPLSESAKGLRCICTRGFCRLL.

The signal sequence occupies residues 1–22; that stretch reads MRTFALLTAMLLLVALHAQAEA. A propeptide spanning residues 23-64 is cleaved from the precursor; the sequence is RQARADEAAAQQQPGTDDQGMAHSFTWPENAALPLSESAKGL. Residues 25-45 form a disordered region; that stretch reads ARADEAAAQQQPGTDDQGMAH. Residue Arg65 forms a Cyclopeptide (Arg-Cys) (interchain with C-73 in subunit A); in form RTD-3 linkage. Residue Arg65 forms a Cyclopeptide (Arg-Cys) (interchain with C-73 in subunit B); in form RTD-1 linkage. Cys68 and Cys73 are oxidised to a cystine. A Cyclopeptide (Cys-Arg) (interchain with R-65 in subunit A); in form RTD-3 cross-link involves residue Cys73. Residue Cys73 forms a Cyclopeptide (Cys-Arg) (interchain with R-65 in subunit B); in form RTD-1 linkage. The propeptide occupies 74–76; that stretch reads RLL.

Belongs to the alpha-defensin family. Theta subfamily. As to quaternary structure, RTD-1 is a cyclic heterodimer composed of subunits A and B; disulfide-linked. RTD-3 is a cyclic homodimer composed of two subunits A; disulfide-linked. Forms a cyclic peptide with subunit A (RTD-3) or with subunit B (RTD-1). An additional intersubunit disulfide bond is formed. In terms of tissue distribution, RTD-1 is expressed in bone marrow. Detected in promyelocytes, myelocytes and mature neutrophils and monocytes.

RTD-1 and RTD-3 have similar antimicrobial activities against the Gram-positive bacteria S.aureus 502A and L.monocytogenes, the Gram-negative bacteria S.typhimurium and E.coli ML35, and the fungi C.albicans 16820 and C.neoformans 271A. The polypeptide is Rhesus theta defensin-1/3 subunit A (RTD1A) (Macaca mulatta (Rhesus macaque)).